A 103-amino-acid chain; its full sequence is MAANPPGQGFQNKNRVAILAELDKEKRRLIQSQTLNNPGASIPLSRPAVNKEFRDQAEQQHIAAQQKAALQHAHAHSSGFFITQDSSFGNLILPVLPRLDPLE.

It belongs to the SOSS-C family. In terms of assembly, belongs to the multiprotein complex Integrator. Component of the SOSS complex, composed of soss-b (soss-b1/nabp2 or soss-b2/nabp1), soss-a/ints3 and soss-c/inip.

It localises to the nucleus. Functionally, component of the SOSS complex, a multiprotein complex that functions downstream of the MRN complex to promote DNA repair and G2/M checkpoint. The SOSS complex associates with single-stranded DNA at DNA lesions and influences diverse endpoints in the cellular DNA damage response including cell-cycle checkpoint activation, recombinational repair and maintenance of genomic stability. Required for efficient homologous recombination-dependent repair of double-strand breaks (DSBs). In Danio rerio (Zebrafish), this protein is SOSS complex subunit C (inip).